Reading from the N-terminus, the 105-residue chain is UPF0235 protein A1G_07140 (105 aa).

The protein belongs to the UPF0235 family.

The polypeptide is UPF0235 protein A1G_07140 (Rickettsia rickettsii (strain Sheila Smith)).